The sequence spans 613 residues: Autophagy-related protein 22-2 (613 aa).

Residues 1–28 form a disordered region; sequence MVLNSTPPASPGAEAQQRPPRYPGEDTA. Residues 41–61 traverse the membrane as a helical segment; it reads YGIAAEVFAVCGVGSFLPLTL. Residues 80 to 96 are compositionally biased toward polar residues; that stretch reads GSSSPSTAPGNGTTTAT. A disordered region spans residues 80 to 99; that stretch reads GSSSPSTAPGNGTTTATLRR. Asn90 is a glycosylation site (N-linked (GlcNAc...) asparagine). 3 helical membrane-spanning segments follow: residues 120–140, 155–177, and 189–209; these read SFAMYTFSLAVLVQALTLISF, LAFGFIGSMTSMLFIFIAPPVYI, and CLGSSFVVLNSFLPVLVANDP. Positions 216-257 are disordered; the sequence is KEEGEELSPVNSSGEFARSEDLDEENVRDSDDHFTTGHGLKT. N-linked (GlcNAc...) asparagine glycosylation is present at Asn226. Residues 232-250 show a composition bias toward basic and acidic residues; that stretch reads ARSEDLDEENVRDSDDHFT. Helical transmembrane passes span 278-298, 307-327, 382-402, and 418-438; these read VGLGYCAAVLVQILSILMLFA, ISGTLPMRFVLLLVGIWWFSF, VIVFLIAWFLLSDAMATVSGT, and VGLLSITATLSGMAGAFLWPV. Asn448 carries N-linked (GlcNAc...) asparagine glycosylation. A run of 4 helical transmembrane segments spans residues 453 to 473, 488 to 510, 522 to 544, and 553 to 573; these read LCIALFEVIPLYGMLAYIPLF, FPLGIVHGLVSGGLSSYCRSFFG, YALYAATDKGSSFIGPAIVGMLI, and GFFFIAVLILLPIPLIWMVNA. A disordered region spans residues 592–613; that stretch reads GEHASEYGGPSEEAEGLLARDI.

It belongs to the ATG22 family.

The protein localises to the vacuole membrane. Vacuolar effluxer which mediate the efflux of amino acids resulting from autophagic degradation. The release of autophagic amino acids allows the maintenance of protein synthesis and viability during nitrogen starvation. The sequence is that of Autophagy-related protein 22-2 (atg22-2) from Neosartorya fischeri (strain ATCC 1020 / DSM 3700 / CBS 544.65 / FGSC A1164 / JCM 1740 / NRRL 181 / WB 181) (Aspergillus fischerianus).